The following is a 526-amino-acid chain: Adenylyl cyclase-associated protein (526 aa).

Residues 1–168 (MPDSKYTMQG…RQSKYFAYLS (168 aa)) are adenyl cyclase-binding. Disordered regions lie at residues 43–72 (EASKNNKPSDSGADANTTNEPSAENAPEVE), 255–304 (QSTK…DANK), and 326–371 (KVDK…RPPR). Residues 45 to 64 (SKNNKPSDSGADANTTNEPS) are compositionally biased toward polar residues. The SH3-binding signature appears at 169–369 (ALSEGAPLFS…KPSTLKTKRP (201 aa)). Over residues 262-274 (ATSSPSPASATAA) the composition is skewed to low complexity. Residues 275 to 285 (PAPPPPPPAPP) are compositionally biased toward pro residues. A compositionally biased stretch (polar residues) spans 290–302 (EISNDTPATSSDA). Over residues 326-338 (KVDKSQQTHKNPE) the composition is skewed to basic and acidic residues. The span at 342-352 (SSTVSSTGSKS) shows a compositional bias: low complexity. The tract at residues 354–361 (PPPRPKKP) is interaction with SH3 domain of ABP1. Residues 357–370 (RPKKPSTLKTKRPP) show a composition bias toward basic residues. One can recognise a C-CAP/cofactor C-like domain in the interval 369 to 504 (PPRKELVGNK…EDDDYVEFPI (136 aa)). Residues 370–526 (PRKELVGNKW…FKSAVFEHAG (157 aa)) form a dimerization and actin-binding region. Ser-454 carries the phosphoserine modification.

The protein belongs to the CAP family. In terms of assembly, homodimer.

It is found in the cytoplasm. The protein resides in the cytoskeleton. The protein localises to the actin patch. Functionally, the N-terminal domain binds to adenylyl cyclase, thereby enabling adenylyl cyclase to be activated by upstream regulatory signals, such as Ras. The C-terminal domain is required for normal cellular morphology and growth control. This is Adenylyl cyclase-associated protein (SRV2) from Saccharomyces cerevisiae (strain ATCC 204508 / S288c) (Baker's yeast).